The sequence spans 492 residues: Bifunctional purine biosynthesis protein PurH (492 aa).

The region spanning 1–144 (MKKAILSVSN…KNYKHVTTIV (144 aa)) is the MGS-like domain.

The protein belongs to the PurH family.

It catalyses the reaction (6R)-10-formyltetrahydrofolate + 5-amino-1-(5-phospho-beta-D-ribosyl)imidazole-4-carboxamide = 5-formamido-1-(5-phospho-D-ribosyl)imidazole-4-carboxamide + (6S)-5,6,7,8-tetrahydrofolate. The enzyme catalyses IMP + H2O = 5-formamido-1-(5-phospho-D-ribosyl)imidazole-4-carboxamide. It functions in the pathway purine metabolism; IMP biosynthesis via de novo pathway; 5-formamido-1-(5-phospho-D-ribosyl)imidazole-4-carboxamide from 5-amino-1-(5-phospho-D-ribosyl)imidazole-4-carboxamide (10-formyl THF route): step 1/1. The protein operates within purine metabolism; IMP biosynthesis via de novo pathway; IMP from 5-formamido-1-(5-phospho-D-ribosyl)imidazole-4-carboxamide: step 1/1. The polypeptide is Bifunctional purine biosynthesis protein PurH (Staphylococcus aureus (strain MRSA252)).